The primary structure comprises 405 residues: Threonine synthase (405 aa).

Lys104 bears the N6-(pyridoxal phosphate)lysine mark. Pyridoxal 5'-phosphate contacts are provided by residues Asn130, Gly231–Asn235, and Thr369.

This sequence belongs to the threonine synthase family. In terms of assembly, homotrimer. Pyridoxal 5'-phosphate is required as a cofactor.

The enzyme catalyses O-phospho-L-homoserine + H2O = L-threonine + phosphate. It functions in the pathway amino-acid biosynthesis; L-threonine biosynthesis; L-threonine from L-aspartate: step 5/5. Functionally, catalyzes the gamma-elimination of phosphate from L-phosphohomoserine and the beta-addition of water to produce L-threonine. Does not catalyze the conversion of O-acetyl-L-homoserine into threonine. The chain is Threonine synthase (thrC) from Methanosarcina acetivorans (strain ATCC 35395 / DSM 2834 / JCM 12185 / C2A).